The sequence spans 2321 residues: Neurogenic locus notch homolog protein 3 (2321 aa).

Positions 1-14 are enriched in basic residues; sequence MGPGARGRRRRRRP. The interval 1–26 is disordered; sequence MGPGARGRRRRRRPMSPPPPPPPVRA. Residues 1–39 form the signal peptide; the sequence is MGPGARGRRRRRRPMSPPPPPPPVRALPLLLLLAGPGAA. Residues 15 to 25 show a composition bias toward pro residues; that stretch reads MSPPPPPPPVR. 3 EGF-like domains span residues 40 to 77, 78 to 118, and 119 to 156; these read APPC…ERCQ, LEDP…PDCS, and LPDP…RSCR. Residues 40 to 1643 lie on the Extracellular side of the membrane; it reads APPCLDGSPC…LEPPEPSVPL (1604 aa). 99 disulfide bridges follow: Cys43-Cys55, Cys49-Cys65, Cys67-Cys76, Cys82-Cys93, Cys87-Cys106, Cys108-Cys117, Cys123-Cys134, Cys128-Cys144, Cys146-Cys155, Cys162-Cys174, Cys168-Cys183, Cys185-Cys194, Cys201-Cys212, Cys206-Cys222, Cys224-Cys233, Cys240-Cys251, Cys245-Cys260, Cys262-Cys271, Cys278-Cys291, Cys285-Cys300, Cys302-Cys311, Cys318-Cys329, Cys323-Cys338, Cys340-Cys349, Cys355-Cys366, Cys360-Cys377, Cys379-Cys388, Cys395-Cys408, Cys402-Cys417, Cys419-Cys428, Cys435-Cys446, Cys440-Cys455, Cys457-Cys466, Cys473-Cys484, Cys478-Cys493, Cys495-Cys504, Cys511-Cys522, Cys516-Cys531, Cys533-Cys542, Cys549-Cys559, Cys554-Cys568, Cys570-Cys579, Cys586-Cys597, Cys591-Cys606, Cys608-Cys617, Cys624-Cys634, Cys629-Cys643, Cys645-Cys654, Cys661-Cys672, Cys666-Cys681, Cys683-Cys692, Cys699-Cys709, Cys704-Cys718, Cys720-Cys729, Cys738-Cys749, Cys743-Cys758, Cys760-Cys769, Cys775-Cys786, Cys780-Cys796, Cys798-Cys807, Cys814-Cys826, Cys820-Cys835, Cys837-Cys846, Cys853-Cys864, Cys858-Cys873, Cys875-Cys884, Cys891-Cys901, Cys896-Cys910, Cys912-Cys921, Cys928-Cys939, Cys933-Cys948, Cys950-Cys959, Cys966-Cys977, Cys971-Cys986, Cys988-Cys997, Cys1004-Cys1015, Cys1009-Cys1022, Cys1024-Cys1033, Cys1040-Cys1061, Cys1055-Cys1070, Cys1072-Cys1081, Cys1088-Cys1099, Cys1093-Cys1108, Cys1110-Cys1119, Cys1126-Cys1137, Cys1131-Cys1146, Cys1148-Cys1157, Cys1164-Cys1182, Cys1176-Cys1191, Cys1193-Cys1202, Cys1209-Cys1222, Cys1214-Cys1232, Cys1234-Cys1243, Cys1250-Cys1261, Cys1255-Cys1275, Cys1277-Cys1286, Cys1293-Cys1304, Cys1298-Cys1313, and Cys1315-Cys1324. An EGF-like 4; calcium-binding domain is found at 158–195; that stretch reads DVDECRVGEPCRHGGTCLNTPGSFRCQCPAGYTGPLCE. In terms of domain architecture, EGF-like 5 spans 197-234; the sequence is PAVPCAPSPCRNGGTCRQSGDLTYDCACLPGFEGQNCE. The EGF-like 6; calcium-binding domain maps to 236 to 272; that stretch reads NVDDCPGHRCLNGGTCVDGVNTYNCQCPPEWTGQFCT. One can recognise an EGF-like 7 domain in the interval 274 to 312; sequence DVDECQLQPNACHNGGTCFNTLGGHSCVCVNGWTGESCS. The region spanning 314–350 is the EGF-like 8; calcium-binding domain; that stretch reads NIDDCATAVCFHGATCHDRVASFYCACPMGKTGLLCH. Residues 351 to 389 form the EGF-like 9 domain; it reads LDDACVSNPCHEDAICDTNPVNGRAICTCPPGFTGGACD. The region spanning 391-429 is the EGF-like 10; calcium-binding domain; that stretch reads DVDECSIGANPCEHLGRCVNTQGSFLCQCGRGYTGPRCE. The EGF-like 11; calcium-binding domain occupies 431 to 467; that stretch reads DVNECLSGPCRNQATCLDRIGQFTCICMAGFTGTYCE. Residues 469–505 form the EGF-like 12; calcium-binding domain; the sequence is DIDECQSSPCVNGGVCKDRVNGFSCTCPSGFSGSTCQ. Residues 507–543 form the EGF-like 13; calcium-binding domain; sequence DVDECASTPCRNGAKCVDQPDGYECRCAEGFEGTLCD. The region spanning 545–580 is the EGF-like 14; calcium-binding domain; the sequence is NVDDCSPDPCHHGRCVDGIASFSCACAPGYTGTRCE. The region spanning 582 to 618 is the EGF-like 15; calcium-binding domain; sequence QVDECRSQPCRHGGKCLDLVDKYLCRCPSGTTGVNCE. The 36-residue stretch at 620-655 folds into the EGF-like 16; calcium-binding domain; that stretch reads NIDDCASNPCTFGVCRDGINRYDCVCQPGFTGPLCN. The region spanning 657 to 693 is the EGF-like 17; calcium-binding domain; that stretch reads EINECASSPCGEGGSCVDGENGFRCLCPPGSLPPLCL. 3 consecutive EGF-like domains span residues 695-730, 734-770, and 771-808; these read PSHP…PRCS, ARDA…RQCE, and LLSP…PRCQ. In terms of domain architecture, EGF-like 21; calcium-binding spans 810–847; sequence DVDECAGPAPCGPHGICTNLAGSFSCTCHGGYTGPSCD. Residues 849–885 form the EGF-like 22; calcium-binding domain; sequence DINDCDPNPCLNGGSCQDGVGSFSCSCLPGFAGPRCA. The 36-residue stretch at 887-922 folds into the EGF-like 23; calcium-binding domain; that stretch reads DVDECLSNPCGPGTCTDHVASFTCTCPPGYGGFHCE. 5 consecutive EGF-like domains span residues 924–960, 962–998, 1000–1034, 1036–1082, and 1084–1120; these read DLPD…AHCQ, EADP…PQCQ, LVDW…RLCD, RSLP…SHCE, and EVDP…DNCE. Residues 1122–1158 enclose the EGF-like 29; calcium-binding domain; that stretch reads DVDECASQPCQHGGSCIDLVARYLCSCPPGTLGVLCE. In terms of domain architecture, EGF-like 30; calcium-binding spans 1160 to 1203; sequence NEDDCGPGPPLDSGPRCLHNGTCVDLVGGFRCTCPPGYTGLRCE. A glycan (N-linked (GlcNAc...) asparagine) is linked at Asn1179. 4 EGF-like domains span residues 1205-1244, 1246-1287, 1289-1325, and 1335-1373; these read DINE…PRCQ, VLSP…PRCE, VARS…PSCR, and SNAS…PRCE. An N-linked (GlcNAc...) asparagine glycan is attached at Asn1336. Disulfide bonds link Cys1339–Cys1350, Cys1344–Cys1361, Cys1363–Cys1372, Cys1387–Cys1410, Cys1392–Cys1405, Cys1401–Cys1417, Cys1428–Cys1451, Cys1433–Cys1446, Cys1442–Cys1458, Cys1467–Cys1493, Cys1475–Cys1488, and Cys1484–Cys1500. LNR repeat units lie at residues 1387–1427, 1428–1458, and 1467–1505; these read CPRA…PWRQ, CEAL…NFDC, and CNPV…SEVP. Asn1438 carries an N-linked (GlcNAc...) asparagine glycan. The helical transmembrane segment at 1644-1664 threads the bilayer; it reads LPLLVAGAVLLLVILVLGVMV. At 1665 to 2321 the chain is on the cytoplasmic side; sequence ARRKREHSTL…EVTPKRQVLA (657 aa). 5 ANK repeats span residues 1838-1867, 1871-1901, 1905-1934, 1938-1967, and 1971-2000; these read TGET…DTNA, SGRT…DLDA, DGST…DVNA, LGKS…NKDM, and KEET…NREI. A disordered region spans residues 2024–2120; it reads LDQPSGPRSP…FGGPPASPGG (97 aa). Low complexity predominate over residues 2039–2053; that stretch reads LGPLLCPPGAFLPGL. Arg2174 carries the post-translational modification Omega-N-methylarginine. The tract at residues 2190 to 2321 is disordered; it reads APGPQLLNPG…EVTPKRQVLA (132 aa). Low complexity predominate over residues 2269–2289; the sequence is STPSPATATGAMATTTGALPA. A compositionally biased stretch (polar residues) spans 2296-2308; sequence VPSSLAQAQTQLG.

This sequence belongs to the NOTCH family. In terms of assembly, heterodimer of a C-terminal fragment N(TM) and a N-terminal fragment N(EC) which are probably linked by disulfide bonds. Interacts with MAML1, MAML2 and MAML3 which act as transcriptional coactivators for NOTCH3. Interacts with PSMA1. Interacts with HIF1AN. Post-translationally, synthesized in the endoplasmic reticulum as an inactive form which is proteolytically cleaved by a furin-like convertase in the trans-Golgi network before it reaches the plasma membrane to yield an active, ligand-accessible form. Cleavage results in a C-terminal fragment N(TM) and a N-terminal fragment N(EC). Following ligand binding, it is cleaved by TNF-alpha converting enzyme (TACE) to yield a membrane-associated intermediate fragment called notch extracellular truncation (NEXT). This fragment is then cleaved by presenilin dependent gamma-secretase to release a notch-derived peptide containing the intracellular domain (NICD) from the membrane. Phosphorylated. In terms of processing, hydroxylated by HIF1AN. Ubiquitously expressed in fetal and adult tissues.

It is found in the cell membrane. The protein resides in the nucleus. In terms of biological role, functions as a receptor for membrane-bound ligands Jagged1, Jagged2 and Delta1 to regulate cell-fate determination. Upon ligand activation through the released notch intracellular domain (NICD) it forms a transcriptional activator complex with RBPJ/RBPSUH and activates genes of the enhancer of split locus. Affects the implementation of differentiation, proliferation and apoptotic programs. The sequence is that of Neurogenic locus notch homolog protein 3 (NOTCH3) from Homo sapiens (Human).